A 679-amino-acid polypeptide reads, in one-letter code: Methionine--tRNA ligase (679 aa).

Residues 14–24 carry the 'HIGH' region motif; that stretch reads PYANGSIHLGH. Cys145, Cys148, Cys158, and Cys161 together coordinate Zn(2+). Positions 331 to 335 match the 'KMSKS' region motif; it reads KMSKS. ATP is bound at residue Lys334. Residues 577-679 enclose the tRNA-binding domain; that stretch reads TFAAVDLRVA…SGAKPGQRIK (103 aa).

The protein belongs to the class-I aminoacyl-tRNA synthetase family. MetG type 1 subfamily. As to quaternary structure, homodimer. It depends on Zn(2+) as a cofactor.

The protein resides in the cytoplasm. The enzyme catalyses tRNA(Met) + L-methionine + ATP = L-methionyl-tRNA(Met) + AMP + diphosphate. Its function is as follows. Is required not only for elongation of protein synthesis but also for the initiation of all mRNA translation through initiator tRNA(fMet) aminoacylation. The sequence is that of Methionine--tRNA ligase from Pseudomonas putida (strain ATCC 700007 / DSM 6899 / JCM 31910 / BCRC 17059 / LMG 24140 / F1).